A 509-amino-acid chain; its full sequence is Probable xyloglucan galactosyltransferase GT12 (509 aa).

Residues 1 to 3 lie on the Cytoplasmic side of the membrane; the sequence is MMK. A helical; Signal-anchor for type II membrane protein membrane pass occupies residues 4–24; it reads PVPKLWVVISSAFVFCLLVLF. The Lumenal portion of the chain corresponds to 25 to 509; that stretch reads QINKSDLIEA…KLEIIHEKTA (485 aa). N-linked (GlcNAc...) asparagine glycosylation is found at asparagine 27, asparagine 59, asparagine 65, asparagine 169, asparagine 170, asparagine 195, asparagine 257, and asparagine 416.

Belongs to the glycosyltransferase 47 family. In terms of tissue distribution, expressed in pollen grains.

Its subcellular location is the golgi apparatus membrane. In terms of biological role, functions in xyloglucan synthesis by adding side chains to the xylosylated glucan backbone. Involved in the galactosylation of hemicellulose xyloglucan. The chain is Probable xyloglucan galactosyltransferase GT12 from Arabidopsis thaliana (Mouse-ear cress).